Consider the following 429-residue polypeptide: Enolase (429 aa).

Gln162 contributes to the (2R)-2-phosphoglycerate binding site. Glu204 (proton donor) is an active-site residue. Positions 241, 283, and 310 each coordinate Mg(2+). (2R)-2-phosphoglycerate-binding residues include Lys335, Arg364, Ser365, and Lys386. The active-site Proton acceptor is Lys335.

This sequence belongs to the enolase family. It depends on Mg(2+) as a cofactor.

It localises to the cytoplasm. The protein resides in the secreted. The protein localises to the cell surface. It carries out the reaction (2R)-2-phosphoglycerate = phosphoenolpyruvate + H2O. Its pathway is carbohydrate degradation; glycolysis; pyruvate from D-glyceraldehyde 3-phosphate: step 4/5. Functionally, catalyzes the reversible conversion of 2-phosphoglycerate (2-PG) into phosphoenolpyruvate (PEP). It is essential for the degradation of carbohydrates via glycolysis. The chain is Enolase from Mycobacterium leprae (strain TN).